We begin with the raw amino-acid sequence, 1225 residues long: RNA-directed RNA polymerase VP2 (1225 aa).

The 231-residue stretch at 497 to 727 (LFLSFMPYTI…NSIVLLQQLV (231 aa)) folds into the RdRp catalytic domain.

It belongs to the reoviridae RNA-directed RNA polymerase family. Interacts with VP6.

It catalyses the reaction RNA(n) + a ribonucleoside 5'-triphosphate = RNA(n+1) + diphosphate. Its function is as follows. RNA-directed RNA polymerase that is involved in transcription and genome replication. Following infection, it catalyzes the synthesis of fully conservative plus strands. After core assembly, which consists in recruitment of one capped plus-strand for each genomic segments and polymerase complexes, the polymerase switches mode and catalyzes the synthesis of complementary minus-strands. The protein is RNA-directed RNA polymerase VP2 (S2) of Lymantria dispar (Gypsy moth).